Here is a 363-residue protein sequence, read N- to C-terminus: Adenylate cyclase 2 (363 aa).

Residues 157–286 (VFLFIDLAGS…DTVNTTARLE (130 aa)) enclose the Guanylate cyclase domain. Residues D162 and D206 each coordinate Mg(2+). The segment at 341–363 (GDGATEPAGETVRSPAAEAFTSL) is disordered.

It belongs to the adenylyl cyclase class-3 family. It depends on Mg(2+) as a cofactor.

The enzyme catalyses ATP = 3',5'-cyclic AMP + diphosphate. Plays essential roles in regulation of cellular metabolism by catalyzing the synthesis of a second messenger, cAMP. The chain is Adenylate cyclase 2 (cya2) from Rhizobium meliloti (strain 1021) (Ensifer meliloti).